The sequence spans 337 residues: Glyceraldehyde-3-phosphate dehydrogenase (337 aa).

NAD(+) is bound by residues 12 to 13, aspartate 34, and arginine 79; that span reads RI. Residues 150–152, threonine 181, 210–211, and arginine 233 each bind D-glyceraldehyde 3-phosphate; these read SCT and TG. The active-site Nucleophile is the cysteine 151. Asparagine 315 provides a ligand contact to NAD(+).

Belongs to the glyceraldehyde-3-phosphate dehydrogenase family. Homotetramer.

The protein localises to the cytoplasm. The enzyme catalyses D-glyceraldehyde 3-phosphate + phosphate + NAD(+) = (2R)-3-phospho-glyceroyl phosphate + NADH + H(+). It functions in the pathway carbohydrate degradation; glycolysis; pyruvate from D-glyceraldehyde 3-phosphate: step 1/5. In Cryphonectria parasitica (Chestnut blight fungus), this protein is Glyceraldehyde-3-phosphate dehydrogenase.